Consider the following 1697-residue polypeptide: SAC3 family protein B (1697 aa).

4 disordered regions span residues 54 to 134, 167 to 280, 306 to 413, and 491 to 512; these read PPAS…QPGG, QRPN…SRSN, EATR…EQAR, and ESER…VDGD. Positions 120-134 are enriched in low complexity; that stretch reads QNPSPSSGQPYQPGG. Basic and acidic residues predominate over residues 178 to 192; sequence DGSRNFLKDHGEHSR. The span at 193-202 shows a compositional bias: polar residues; sequence ATSPPATSHI. Basic and acidic residues predominate over residues 215–227; sequence RSQDSKRKSRSDI. Composition is skewed to polar residues over residues 233 to 243, 257 to 280, and 335 to 380; these read MGFSRRNQSPV, PLSS…SRSN, and RFST…SPAT. The PCI domain occupies 625–813; it reads NIEQMNKTSV…KCSKLVHMKK (189 aa).

This sequence belongs to the SAC3 family. In terms of assembly, interacts with SAC3A, EER5 and CML19. Interacts with UCH1 and UCH2.

It localises to the nucleus. Functionally, component of the TREX-2 complex (transcription and export complex 2), a muliprotein complex that functions in docking export-competent ribonucleoprotein particles (mRNPs) to the nuclear entrance of the nuclear pore complex (nuclear basket). TREX-2 participates in mRNA export and accurate chromatin positioning in the nucleus by tethering genes to the nuclear periphery. The chain is SAC3 family protein B from Arabidopsis thaliana (Mouse-ear cress).